Reading from the N-terminus, the 434-residue chain is Serine--tRNA ligase (434 aa).

Residue 230-232 (TSE) coordinates L-serine. ATP is bound by residues 261-263 (RRE) and V277. E284 lines the L-serine pocket. 348–351 (ELTS) contacts ATP. T393 provides a ligand contact to L-serine.

The protein belongs to the class-II aminoacyl-tRNA synthetase family. Type-1 seryl-tRNA synthetase subfamily. Homodimer. The tRNA molecule binds across the dimer.

The protein resides in the cytoplasm. The catalysed reaction is tRNA(Ser) + L-serine + ATP = L-seryl-tRNA(Ser) + AMP + diphosphate + H(+). The enzyme catalyses tRNA(Sec) + L-serine + ATP = L-seryl-tRNA(Sec) + AMP + diphosphate + H(+). Its pathway is aminoacyl-tRNA biosynthesis; selenocysteinyl-tRNA(Sec) biosynthesis; L-seryl-tRNA(Sec) from L-serine and tRNA(Sec): step 1/1. Its function is as follows. Catalyzes the attachment of serine to tRNA(Ser). Is also able to aminoacylate tRNA(Sec) with serine, to form the misacylated tRNA L-seryl-tRNA(Sec), which will be further converted into selenocysteinyl-tRNA(Sec). The chain is Serine--tRNA ligase from Kocuria rhizophila (strain ATCC 9341 / DSM 348 / NBRC 103217 / DC2201).